The following is a 93-amino-acid chain: Small ribosomal subunit protein uS19c (93 aa).

The protein belongs to the universal ribosomal protein uS19 family.

It localises to the plastid. It is found in the chloroplast. Functionally, protein S19 forms a complex with S13 that binds strongly to the 16S ribosomal RNA. The sequence is that of Small ribosomal subunit protein uS19c from Ipomoea purpurea (Common morning glory).